Reading from the N-terminus, the 647-residue chain is Threonine--tRNA ligase (647 aa).

One can recognise a TGS domain in the interval 1–61 (MINITFPDGA…TEDGSIEIVT (61 aa)). The tract at residues 242–540 (DHRKLGKELD…LIENYKGAFP (299 aa)) is catalytic. The Zn(2+) site is built by cysteine 336, histidine 387, and histidine 517.

The protein belongs to the class-II aminoacyl-tRNA synthetase family. As to quaternary structure, homodimer. Zn(2+) is required as a cofactor.

It is found in the cytoplasm. It carries out the reaction tRNA(Thr) + L-threonine + ATP = L-threonyl-tRNA(Thr) + AMP + diphosphate + H(+). Its function is as follows. Catalyzes the attachment of threonine to tRNA(Thr) in a two-step reaction: L-threonine is first activated by ATP to form Thr-AMP and then transferred to the acceptor end of tRNA(Thr). Also edits incorrectly charged L-seryl-tRNA(Thr). The protein is Threonine--tRNA ligase of Streptococcus pneumoniae (strain ATCC 700669 / Spain 23F-1).